Here is a 356-residue protein sequence, read N- to C-terminus: DNA polymerase IV (356 aa).

The 182-residue stretch at 6 to 187 folds into the UmuC domain; the sequence is IIHIDMDYFF…LDIGDFPGVG (182 aa). Asp-10 and Asp-105 together coordinate Mg(2+). Residue Glu-106 is part of the active site.

Belongs to the DNA polymerase type-Y family. As to quaternary structure, monomer. Mg(2+) is required as a cofactor.

It is found in the cytoplasm. It catalyses the reaction DNA(n) + a 2'-deoxyribonucleoside 5'-triphosphate = DNA(n+1) + diphosphate. Poorly processive, error-prone DNA polymerase involved in untargeted mutagenesis. Copies undamaged DNA at stalled replication forks, which arise in vivo from mismatched or misaligned primer ends. These misaligned primers can be extended by PolIV. Exhibits no 3'-5' exonuclease (proofreading) activity. May be involved in translesional synthesis, in conjunction with the beta clamp from PolIII. This is DNA polymerase IV from Staphylococcus epidermidis (strain ATCC 12228 / FDA PCI 1200).